Reading from the N-terminus, the 511-residue chain is Exodeoxyribonuclease 7 large subunit (511 aa).

It belongs to the XseA family. In terms of assembly, heterooligomer composed of large and small subunits.

It is found in the cytoplasm. The enzyme catalyses Exonucleolytic cleavage in either 5'- to 3'- or 3'- to 5'-direction to yield nucleoside 5'-phosphates.. Its function is as follows. Bidirectionally degrades single-stranded DNA into large acid-insoluble oligonucleotides, which are then degraded further into small acid-soluble oligonucleotides. This chain is Exodeoxyribonuclease 7 large subunit, found in Brucella suis (strain ATCC 23445 / NCTC 10510).